We begin with the raw amino-acid sequence, 71 residues long: SPbeta prophage-derived uncharacterized protein YorP (71 aa).

The protein is SPbeta prophage-derived uncharacterized protein YorP (yorP) of Bacillus subtilis (strain 168).